A 589-amino-acid chain; its full sequence is Glutamine--fructose-6-phosphate aminotransferase [isomerizing] (589 aa).

The active-site Nucleophile; for GATase activity is Cys2. The Glutamine amidotransferase type-2 domain occupies 2-221; it reads CGIIGIVSLR…DDELGFITPE (220 aa). 2 consecutive SIS domains span residues 286–426 and 445–579; these read VIEE…KMEK and IGEE…PDKP. Lys584 serves as the catalytic For Fru-6P isomerization activity.

In terms of assembly, homodimer.

The protein resides in the cytoplasm. The catalysed reaction is D-fructose 6-phosphate + L-glutamine = D-glucosamine 6-phosphate + L-glutamate. Functionally, catalyzes the first step in hexosamine metabolism, converting fructose-6P into glucosamine-6P using glutamine as a nitrogen source. The chain is Glutamine--fructose-6-phosphate aminotransferase [isomerizing] from Sulfurisphaera tokodaii (strain DSM 16993 / JCM 10545 / NBRC 100140 / 7) (Sulfolobus tokodaii).